Reading from the N-terminus, the 286-residue chain is Ribosome-inactivating protein momordin II (286 aa).

Residues 1-23 (MVKCLLLSFLIIAIFIGVPTAKG) form the signal peptide. The active site involves glutamate 181.

This sequence belongs to the ribosome-inactivating protein family. Type 1 RIP subfamily.

It catalyses the reaction Endohydrolysis of the N-glycosidic bond at one specific adenosine on the 28S rRNA.. In Momordica balsamina (Bitter gourd), this protein is Ribosome-inactivating protein momordin II.